We begin with the raw amino-acid sequence, 264 residues long: uncharacterized protein (264 aa).

A signal peptide spans 1–16 (MKGKSALTLLLAGIFS). The N-palmitoyl cysteine moiety is linked to residue Cys17. A lipid anchor (S-diacylglycerol cysteine) is attached at Cys17.

The protein localises to the cell inner membrane. This is an uncharacterized protein from Escherichia coli (strain K12).